Consider the following 120-residue polypeptide: uncharacterized protein (120 aa).

The next 3 membrane-spanning stretches (helical) occupy residues 20 to 39 (FFWPALIVIILTIAAFCYLL), 52 to 71 (GSSLVGLLGGILALYLLFSI), and 86 to 108 (ILVVLAYFGGFLASTMLLYSIIG).

It localises to the cell membrane. This is an uncharacterized protein from Pasteurella multocida (strain Pm70).